The following is a 440-amino-acid chain: Ribosomal protein uS12 methylthiotransferase RimO (440 aa).

The MTTase N-terminal domain maps to 8 to 118 (PTVGFVSLGC…VMGIVHTHLP (111 aa)). [4Fe-4S] cluster-binding residues include Cys17, Cys53, Cys82, Cys149, Cys153, and Cys156. The Radical SAM core domain maps to 135–372 (LTPDHFAYLK…MQVQEDISAD (238 aa)). Residues 375–440 (AAKIDTVIQV…DHHDLYAQVV (66 aa)) enclose the TRAM domain.

The protein belongs to the methylthiotransferase family. RimO subfamily. [4Fe-4S] cluster is required as a cofactor.

It is found in the cytoplasm. It catalyses the reaction L-aspartate(89)-[ribosomal protein uS12]-hydrogen + (sulfur carrier)-SH + AH2 + 2 S-adenosyl-L-methionine = 3-methylsulfanyl-L-aspartate(89)-[ribosomal protein uS12]-hydrogen + (sulfur carrier)-H + 5'-deoxyadenosine + L-methionine + A + S-adenosyl-L-homocysteine + 2 H(+). In terms of biological role, catalyzes the methylthiolation of an aspartic acid residue of ribosomal protein uS12. This is Ribosomal protein uS12 methylthiotransferase RimO from Dechloromonas aromatica (strain RCB).